Here is a 412-residue protein sequence, read N- to C-terminus: Poly-beta-1,6-N-acetyl-D-glucosamine synthase (412 aa).

A run of 4 helical transmembrane segments spans residues 7-28 (LLFY…YFFI), 298-320 (IASI…TANI), 332-354 (IFFF…ALFI), and 364-386 (VGLI…VVIM).

The protein belongs to the glycosyltransferase 2 family.

Its subcellular location is the cell membrane. In terms of biological role, N-acetylglucosaminyltransferase that catalyzes the polymerization of single monomer units of UDP-N-acetylglucosamine to produce the linear homomer poly-beta-1,6-N-acetyl-D-glucosamine (PNAG, also referred to as PIA), a biofilm adhesin polysaccharide. Requires IcaD for full activity. The polypeptide is Poly-beta-1,6-N-acetyl-D-glucosamine synthase (icaA) (Staphylococcus epidermidis (strain ATCC 35984 / DSM 28319 / BCRC 17069 / CCUG 31568 / BM 3577 / RP62A)).